A 310-amino-acid polypeptide reads, in one-letter code: Beta-ketoacyl-[acyl-carrier-protein] synthase III 1 (310 aa).

Active-site residues include C112 and H235. An ACP-binding region spans residues 236-240 (QANIR). Residue N265 is part of the active site.

The protein belongs to the thiolase-like superfamily. FabH family. Homodimer.

Its subcellular location is the cytoplasm. It catalyses the reaction malonyl-[ACP] + acetyl-CoA + H(+) = 3-oxobutanoyl-[ACP] + CO2 + CoA. It functions in the pathway lipid metabolism; fatty acid biosynthesis. Functionally, catalyzes the condensation reaction of fatty acid synthesis by the addition to an acyl acceptor of two carbons from malonyl-ACP. Catalyzes the first condensation reaction which initiates fatty acid synthesis and may therefore play a role in governing the total rate of fatty acid production. Possesses both acetoacetyl-ACP synthase and acetyl transacylase activities. Its substrate specificity determines the biosynthesis of branched-chain and/or straight-chain of fatty acids. The chain is Beta-ketoacyl-[acyl-carrier-protein] synthase III 1 from Bacillus anthracis.